Reading from the N-terminus, the 1348-residue chain is Phosphoribosylformylglycinamidine synthase (1348 aa).

Residues glycine 300 to aspartate 311 and alanine 701 each bind ATP. Residues aspartate 702, glutamate 741, asparagine 745, and aspartate 941 each coordinate Mg(2+). Residue serine 943 participates in ATP binding. The Glutamine amidotransferase type-1 domain occupies valine 1099–glycine 1348. Cysteine 1192 serves as the catalytic Nucleophile. Residues histidine 1313 and glutamate 1315 contribute to the active site.

In the N-terminal section; belongs to the FGAMS family. In terms of assembly, monomer.

It localises to the cytoplasm. The catalysed reaction is N(2)-formyl-N(1)-(5-phospho-beta-D-ribosyl)glycinamide + L-glutamine + ATP + H2O = 2-formamido-N(1)-(5-O-phospho-beta-D-ribosyl)acetamidine + L-glutamate + ADP + phosphate + H(+). Its pathway is purine metabolism; IMP biosynthesis via de novo pathway; 5-amino-1-(5-phospho-D-ribosyl)imidazole from N(2)-formyl-N(1)-(5-phospho-D-ribosyl)glycinamide: step 1/2. Phosphoribosylformylglycinamidine synthase involved in the purines biosynthetic pathway. Catalyzes the ATP-dependent conversion of formylglycinamide ribonucleotide (FGAR) and glutamine to yield formylglycinamidine ribonucleotide (FGAM) and glutamate. This Xanthomonas campestris pv. campestris (strain ATCC 33913 / DSM 3586 / NCPPB 528 / LMG 568 / P 25) protein is Phosphoribosylformylglycinamidine synthase.